Reading from the N-terminus, the 508-residue chain is Protein ultraspiracle (508 aa).

Residues 1–103 (MDNCDQDASF…NHPLSGSKHL (103 aa)) are modulating. 2 disordered regions span residues 21 to 40 (PDIS…KAES) and 55 to 92 (PGSN…QQYP). The span at 24–35 (SQLNDSNNSSFS) shows a compositional bias: polar residues. Residue Ser-35 is modified to Phosphoserine. Low complexity predominate over residues 57–90 (SNSASSNNNSAGDAQMAQAPNSAGGSAAAAVQQQ). 2 consecutive NR C4-type zinc fingers follow at residues 104–124 (CSIC…CEGC) and 140–164 (CREN…YQKC). The nuclear receptor DNA-binding region spans 104–169 (CSICGDRASG…RYQKCLTCGM (66 aa)). Residues 170-223 (KREAVQEERQRGARNAAGRLSASGGGSSGPGSVGGSSSQGGGGGGGVSGGMGSG) are hinge. Residues 178-228 (RQRGARNAAGRLSASGGGSSGPGSVGGSSSQGGGGGGGVSGGMGSGNGSDD) are disordered. Positions 192-224 (SGGGSSGPGSVGGSSSQGGGGGGGVSGGMGSGN) are enriched in gly residues. The 260-residue stretch at 239 to 498 (SIERIIEAEQ…ELFLEQLEAP (260 aa)) folds into the NR LBD domain.

This sequence belongs to the nuclear hormone receptor family. NR2 subfamily. As to quaternary structure, heterodimer of USP and ECR. Only the heterodimer is capable of high-affinity binding to ecdysone.

The protein resides in the nucleus. Its function is as follows. Receptor for ecdysone. May be an important modulator of insect metamorphosis. Plays an important part in embryonic and post-embryonic development. Binds to ecdysone response elements (ECRES) such as in the promoter region of s15 chorion gene. This is Protein ultraspiracle (usp) from Drosophila melanogaster (Fruit fly).